The sequence spans 366 residues: Putative F-box protein At1g26515 (366 aa).

Positions 1 to 20 are disordered; sequence MKTRSKKTKTENNQEKSKEK. Over residues 8 to 20 the composition is skewed to basic and acidic residues; sequence TKTENNQEKSKEK. One can recognise an F-box domain in the interval 20 to 66; that stretch reads KNKFDQLPLDLEIEIFRRLPLKSVARFLTLSKSCAATIRSPSFITSF.

This chain is Putative F-box protein At1g26515, found in Arabidopsis thaliana (Mouse-ear cress).